A 416-amino-acid polypeptide reads, in one-letter code: Serine hydroxymethyltransferase (416 aa).

(6S)-5,6,7,8-tetrahydrofolate is bound by residues Leu-121 and Gly-125–Leu-127. Lys-229 bears the N6-(pyridoxal phosphate)lysine mark.

It belongs to the SHMT family. In terms of assembly, homodimer. Requires pyridoxal 5'-phosphate as cofactor.

The protein resides in the cytoplasm. The enzyme catalyses (6R)-5,10-methylene-5,6,7,8-tetrahydrofolate + glycine + H2O = (6S)-5,6,7,8-tetrahydrofolate + L-serine. Its pathway is one-carbon metabolism; tetrahydrofolate interconversion. It functions in the pathway amino-acid biosynthesis; glycine biosynthesis; glycine from L-serine: step 1/1. In terms of biological role, catalyzes the reversible interconversion of serine and glycine with tetrahydrofolate (THF) serving as the one-carbon carrier. This reaction serves as the major source of one-carbon groups required for the biosynthesis of purines, thymidylate, methionine, and other important biomolecules. Also exhibits THF-independent aldolase activity toward beta-hydroxyamino acids, producing glycine and aldehydes, via a retro-aldol mechanism. This is Serine hydroxymethyltransferase from Neisseria meningitidis serogroup B (strain ATCC BAA-335 / MC58).